Here is a 217-residue protein sequence, read N- to C-terminus: Segregation and condensation protein B (217 aa).

Belongs to the ScpB family. As to quaternary structure, homodimer. Homodimerization may be required to stabilize the binding of ScpA to the Smc head domains. Component of a cohesin-like complex composed of ScpA, ScpB and the Smc homodimer, in which ScpA and ScpB bind to the head domain of Smc. The presence of the three proteins is required for the association of the complex with DNA.

It is found in the cytoplasm. Its function is as follows. Participates in chromosomal partition during cell division. May act via the formation of a condensin-like complex containing Smc and ScpA that pull DNA away from mid-cell into both cell halves. This is Segregation and condensation protein B from Geobacillus kaustophilus (strain HTA426).